The following is a 136-amino-acid chain: MSLTLRVLAPDQSVFDGSADEVILPSTTGQLGILPGHVSLLAALDVGVLRVRADGGWKSIALMGGFAEVDADDVTVLVNSAELGSSIDASSAESDLQAARNEVSKMEGQPASADKVKAQQSLDRARARVQAAKNQD.

Positions 88–136 (DASSAESDLQAARNEVSKMEGQPASADKVKAQQSLDRARARVQAAKNQD) are disordered.

Belongs to the ATPase epsilon chain family. As to quaternary structure, F-type ATPases have 2 components, CF(1) - the catalytic core - and CF(0) - the membrane proton channel. CF(1) has five subunits: alpha(3), beta(3), gamma(1), delta(1), epsilon(1). CF(0) has three main subunits: a, b and c.

It is found in the cellular thylakoid membrane. Its function is as follows. Produces ATP from ADP in the presence of a proton gradient across the membrane. In Synechococcus sp. (strain WH7803), this protein is ATP synthase epsilon chain.